The sequence spans 448 residues: Elongation factor 1-alpha (448 aa).

Positions 5-230 (KIHISIVVIG…DQINEPKRPS (226 aa)) constitute a tr-type G domain. The tract at residues 14–21 (GHVDSGKS) is G1. Residue 14 to 21 (GHVDSGKS) coordinates GTP. An N6,N6-dimethyllysine modification is found at Lys55. A G2 region spans residues 70–74 (GITID). Lys79 bears the N6,N6,N6-trimethyllysine mark. The interval 91-94 (DAPG) is G3. GTP is bound by residues 91 to 95 (DAPGH) and 153 to 156 (NKMD). The G4 stretch occupies residues 153 to 156 (NKMD). Lys187 carries the post-translational modification N6,N6,N6-trimethyllysine. The G5 stretch occupies residues 194 to 196 (SGF). Position 261 is an N6-methyllysine (Lys261). Position 289 is a 5-glutamyl glycerylphosphorylethanolamine (Glu289). N6,N6,N6-trimethyllysine is present on Lys306. A 5-glutamyl glycerylphosphorylethanolamine modification is found at Glu362. Lys396 carries the N6,N6,N6-trimethyllysine modification.

This sequence belongs to the TRAFAC class translation factor GTPase superfamily. Classic translation factor GTPase family. EF-Tu/EF-1A subfamily.

Its subcellular location is the cytoplasm. Its function is as follows. This protein promotes the GTP-dependent binding of aminoacyl-tRNA to the A-site of ribosomes during protein biosynthesis. This chain is Elongation factor 1-alpha, found in Solanum lycopersicum (Tomato).